Here is a 284-residue protein sequence, read N- to C-terminus: Ubiquitin thioesterase otubain-like (284 aa).

The 198-residue stretch at 77-274 (GEIRYIRGDG…PGHYDVIYKK (198 aa)) folds into the OTU domain. The active site involves aspartate 85. Cysteine 88 serves as the catalytic Nucleophile. Isoleucine 176 contacts substrate. Catalysis depends on residues histidine 245 and histidine 267.

Belongs to the peptidase C65 family.

The enzyme catalyses Thiol-dependent hydrolysis of ester, thioester, amide, peptide and isopeptide bonds formed by the C-terminal Gly of ubiquitin (a 76-residue protein attached to proteins as an intracellular targeting signal).. Hydrolase that can remove conjugated ubiquitin from proteins and plays an important regulatory role at the level of protein turnover by preventing degradation. Specifically cleaves 'Lys-48'-linked polyubiquitin. This chain is Ubiquitin thioesterase otubain-like (otub-1), found in Caenorhabditis elegans.